We begin with the raw amino-acid sequence, 365 residues long: Alanine racemase (365 aa).

The active-site Proton acceptor; specific for D-alanine is Lys-32. An N6-(pyridoxal phosphate)lysine modification is found at Lys-32. Arg-128 serves as a coordination point for substrate. Tyr-257 functions as the Proton acceptor; specific for L-alanine in the catalytic mechanism. Residue Met-305 coordinates substrate.

This sequence belongs to the alanine racemase family. The cofactor is pyridoxal 5'-phosphate.

The enzyme catalyses L-alanine = D-alanine. It participates in amino-acid biosynthesis; D-alanine biosynthesis; D-alanine from L-alanine: step 1/1. In terms of biological role, catalyzes the interconversion of L-alanine and D-alanine. May also act on other amino acids. The protein is Alanine racemase (alr) of Francisella philomiragia subsp. philomiragia (strain ATCC 25017 / CCUG 19701 / FSC 153 / O#319-036).